Reading from the N-terminus, the 668-residue chain is DNA damage-responsive serine/threonine-protein kinase RqkA (668 aa).

Residues 13 to 272 (YELLALLGEG…SGAALAHLWA (260 aa)) enclose the Protein kinase domain. ATP is bound by residues 19–27 (LGEGGSAQV) and lysine 42. Aspartate 137 functions as the Proton acceptor in the catalytic mechanism.

It belongs to the protein kinase superfamily. Ser/Thr protein kinase family. Pyrroloquinoline quinone serves as cofactor. Post-translationally, autophosphorylated.

It carries out the reaction L-seryl-[protein] + ATP = O-phospho-L-seryl-[protein] + ADP + H(+). The catalysed reaction is L-threonyl-[protein] + ATP = O-phospho-L-threonyl-[protein] + ADP + H(+). With respect to regulation, autokinase activity is stimulated by DNA damage. Stimulated by PQQ and DNA ends in vitro. Functionally, plays an important role in radiation resistance and DNA double-strand break (DSB) repair. Involved in transcriptional regulation of genes important for bacterial stress response. Phosphorylates PprA in vitro. The chain is DNA damage-responsive serine/threonine-protein kinase RqkA (rqkA) from Deinococcus radiodurans (strain ATCC 13939 / DSM 20539 / JCM 16871 / CCUG 27074 / LMG 4051 / NBRC 15346 / NCIMB 9279 / VKM B-1422 / R1).